Consider the following 152-residue polypeptide: Large ribosomal subunit protein uL13 (152 aa).

It belongs to the universal ribosomal protein uL13 family. Part of the 50S ribosomal subunit.

In terms of biological role, this protein is one of the early assembly proteins of the 50S ribosomal subunit, although it is not seen to bind rRNA by itself. It is important during the early stages of 50S assembly. The chain is Large ribosomal subunit protein uL13 from Borreliella afzelii (strain PKo) (Borrelia afzelii).